Consider the following 248-residue polypeptide: 3-deoxy-manno-octulosonate cytidylyltransferase (248 aa).

It belongs to the KdsB family.

It localises to the cytoplasm. The catalysed reaction is 3-deoxy-alpha-D-manno-oct-2-ulosonate + CTP = CMP-3-deoxy-beta-D-manno-octulosonate + diphosphate. Its pathway is nucleotide-sugar biosynthesis; CMP-3-deoxy-D-manno-octulosonate biosynthesis; CMP-3-deoxy-D-manno-octulosonate from 3-deoxy-D-manno-octulosonate and CTP: step 1/1. It functions in the pathway bacterial outer membrane biogenesis; lipopolysaccharide biosynthesis. Activates KDO (a required 8-carbon sugar) for incorporation into bacterial lipopolysaccharide in Gram-negative bacteria. This chain is 3-deoxy-manno-octulosonate cytidylyltransferase, found in Salmonella dublin (strain CT_02021853).